The sequence spans 301 residues: Methionyl-tRNA formyltransferase (301 aa).

109 to 112 (SILP) is a (6S)-5,6,7,8-tetrahydrofolate binding site.

Belongs to the Fmt family.

It catalyses the reaction L-methionyl-tRNA(fMet) + (6R)-10-formyltetrahydrofolate = N-formyl-L-methionyl-tRNA(fMet) + (6S)-5,6,7,8-tetrahydrofolate + H(+). Attaches a formyl group to the free amino group of methionyl-tRNA(fMet). The formyl group appears to play a dual role in the initiator identity of N-formylmethionyl-tRNA by promoting its recognition by IF2 and preventing the misappropriation of this tRNA by the elongation apparatus. This is Methionyl-tRNA formyltransferase from Campylobacter curvus (strain 525.92).